Consider the following 338-residue polypeptide: Ketol-acid reductoisomerase (NADP(+)) (338 aa).

Residues 1–181 form the KARI N-terminal Rossmann domain; sequence MNVYYDKDCD…GGGRSGIIET (181 aa). Residues 24 to 27, Arg47, Ser50, Ser52, and 82 to 85 each bind NADP(+); these read YGSQ and DEFQ. His107 is an active-site residue. Gly133 provides a ligand contact to NADP(+). The KARI C-terminal knotted domain maps to 182 to 327; it reads TFKDETETDL…AKLRGMMPWI (146 aa). Residues Asp190, Glu194, Glu226, and Glu230 each contribute to the Mg(2+) site. Residue Ser251 coordinates substrate.

This sequence belongs to the ketol-acid reductoisomerase family. Requires Mg(2+) as cofactor.

The enzyme catalyses (2R)-2,3-dihydroxy-3-methylbutanoate + NADP(+) = (2S)-2-acetolactate + NADPH + H(+). The catalysed reaction is (2R,3R)-2,3-dihydroxy-3-methylpentanoate + NADP(+) = (S)-2-ethyl-2-hydroxy-3-oxobutanoate + NADPH + H(+). It functions in the pathway amino-acid biosynthesis; L-isoleucine biosynthesis; L-isoleucine from 2-oxobutanoate: step 2/4. It participates in amino-acid biosynthesis; L-valine biosynthesis; L-valine from pyruvate: step 2/4. Functionally, involved in the biosynthesis of branched-chain amino acids (BCAA). Catalyzes an alkyl-migration followed by a ketol-acid reduction of (S)-2-acetolactate (S2AL) to yield (R)-2,3-dihydroxy-isovalerate. In the isomerase reaction, S2AL is rearranged via a Mg-dependent methyl migration to produce 3-hydroxy-3-methyl-2-ketobutyrate (HMKB). In the reductase reaction, this 2-ketoacid undergoes a metal-dependent reduction by NADPH to yield (R)-2,3-dihydroxy-isovalerate. The chain is Ketol-acid reductoisomerase (NADP(+)) from Psychrobacter cryohalolentis (strain ATCC BAA-1226 / DSM 17306 / VKM B-2378 / K5).